A 263-amino-acid polypeptide reads, in one-letter code: 2-keto-4-pentenoate hydratase 1 (263 aa).

This sequence belongs to the hydratase/decarboxylase family. MhpD subfamily. A divalent metal cation is required as a cofactor.

The enzyme catalyses (S)-4-hydroxy-2-oxopentanoate = (2Z)-2-hydroxypenta-2,4-dienoate + H2O. The protein operates within aromatic compound metabolism; 3-phenylpropanoate degradation. Its function is as follows. Catalyzes the conversion of 2-hydroxypentadienoic acid (enolic form of 2-oxopent-4-enoate) to 4-hydroxy-2-ketopentanoic acid. This Dechloromonas aromatica (strain RCB) protein is 2-keto-4-pentenoate hydratase 1.